The primary structure comprises 364 residues: tRNA 2-selenouridine synthase (364 aa).

In terms of domain architecture, Rhodanese spans 14–137; sequence LLADTPLIDV…LRQTAIQATW (124 aa). The S-selanylcysteine intermediate role is filled by cysteine 97.

The protein belongs to the SelU family. Monomer.

The enzyme catalyses 5-methylaminomethyl-2-thiouridine(34) in tRNA + selenophosphate + (2E)-geranyl diphosphate + H2O + H(+) = 5-methylaminomethyl-2-selenouridine(34) in tRNA + (2E)-thiogeraniol + phosphate + diphosphate. It carries out the reaction 5-methylaminomethyl-2-thiouridine(34) in tRNA + (2E)-geranyl diphosphate = 5-methylaminomethyl-S-(2E)-geranyl-thiouridine(34) in tRNA + diphosphate. The catalysed reaction is 5-methylaminomethyl-S-(2E)-geranyl-thiouridine(34) in tRNA + selenophosphate + H(+) = 5-methylaminomethyl-2-(Se-phospho)selenouridine(34) in tRNA + (2E)-thiogeraniol. It catalyses the reaction 5-methylaminomethyl-2-(Se-phospho)selenouridine(34) in tRNA + H2O = 5-methylaminomethyl-2-selenouridine(34) in tRNA + phosphate. Involved in the post-transcriptional modification of the uridine at the wobble position (U34) of tRNA(Lys), tRNA(Glu) and tRNA(Gln). Catalyzes the conversion of 2-thiouridine (S2U-RNA) to 2-selenouridine (Se2U-RNA). Acts in a two-step process involving geranylation of 2-thiouridine (S2U) to S-geranyl-2-thiouridine (geS2U) and subsequent selenation of the latter derivative to 2-selenouridine (Se2U) in the tRNA chain. The sequence is that of tRNA 2-selenouridine synthase from Salmonella paratyphi B (strain ATCC BAA-1250 / SPB7).